The following is a 920-amino-acid chain: Neurofibromin-A (920 aa).

A Ras-GAP domain is found at 63 to 291 (NKTLPLIKDL…EKMSAYFNLI (229 aa)). 2 disordered regions span residues 344–405 (KWLA…TTTA) and 477–508 (LGPS…GASM). Positions 346-369 (LATTPSGNTPSPAISNASSAHNGK) are enriched in polar residues. A compositionally biased stretch (low complexity) spans 370-405 (SNNTTNNNNNNNNNNNNNNNNNNNNNNNSNKTTTTA). The span at 498–507 (PTTSLQNGAS) shows a compositional bias: polar residues. The CRAL-TRIO domain maps to 512–673 (FDECTHMLER…TSKDFITKSY (162 aa)).

Regulator of the GTPase activity of Ras, mainly RasG and RasB. This chain is Neurofibromin-A (nfaA), found in Dictyostelium discoideum (Social amoeba).